Here is a 479-residue protein sequence, read N- to C-terminus: Lysosomal protective protein (479 aa).

An N-terminal signal peptide occupies residues 1-27 (MFRAALWPPVLLLLQLLLLACAPGGEG). 4 disulfides stabilise this stretch: C87/C361, C239/C255, C240/C245, and C280/C330. N-linked (GlcNAc...) asparagine glycosylation is present at N144. The active site involves S177. N-linked (GlcNAc...) asparagine glycosylation is present at N332. Active-site residues include D399 and H456.

The protein belongs to the peptidase S10 family. In terms of assembly, heterodimer of a 32 kDa chain and a 20 kDa chain; disulfide-linked.

Its subcellular location is the lysosome. It carries out the reaction Release of a C-terminal amino acid with broad specificity.. In terms of biological role, protective protein appears to be essential for both the activity of beta-galactosidase and neuraminidase, it associates with these enzymes and exerts a protective function necessary for their stability and activity. This protein is also a carboxypeptidase and can deamidate tachykinins. The polypeptide is Lysosomal protective protein (CTSA) (Bos taurus (Bovine)).